The chain runs to 219 residues: Cell division protein B2 (219 aa).

Functionally, part of a cell division machinery. This chain is Cell division protein B2, found in Sulfolobus acidocaldarius (strain ATCC 33909 / DSM 639 / JCM 8929 / NBRC 15157 / NCIMB 11770).